The following is a 1317-amino-acid chain: MSGLPVSHVGEKVSGGVISTGSPTVHVGSSAVGLADRVSACVPLVGKPVNPMLGSKLLPEEVDFALAAPDTFTFARGYLSSNPRIGRLGRGWWLPGESMHLELSEDACVLVDAQGRRIGFPALAPGAQHYSGSEELWLRRGGSSGGEAQAWRGRWAAVPAELQTQEGSVLVLSGHSYLHFQRCPDGIWRLQASFGRAGYRTEFRWSGRGLLTGVRDSAGRSYALVYQQACEPSEGDDGLRLFGVILASHDGPPPDYIDPQSPGLDWLVRYQFSDSGDLIAVRDRLGQVVRVFAWREHMLVAHGEPGGLEVRYEWDVHAPHGRVVKQIEAGGLTRTFRYLRDATEVSDSLGRVERYEFAGEGGQRRWTALVRADGSRSEFDYDLFGRLVAMRDPLGRETRRRRDGQGRMLEEESPGKARYRKRVDEETGLLVELEDAMQRRWTFERDERGNATTVRGPAGSTRYAYEDPRLPDRPTRIVDPRGGERRLEWNRFGLLAALTDCSGQVWRYDYDNEGRLVASSDPLGQLTRRRYDPLGQLIGLELADGSALSYEYDALGRQTRIADAEGHATLFSWGHGDLLARVSDAGGGELSYLHDEAGRLVALTNENGVQAQFRYDLLDRLVEETGFDGRRQRYRYNAADELIAREDADGRETTYAYDRDGRLASIRVPATEHAPALVERYRWLADGRLASAGGADCEVRYTYDEVGNLRLESQVHADGWVYSVEHSHDALGVRQTSRYGDAPPVAWLTYGPGHLHGALVGAVELAFERDALHREVRRDARRDGQDDALFTQERQHAPLGRLQRSRLRLAGGFDWQRGYRYDGLGQLVGIDDNQYPSVRYEYDLGGRLLASRRAGAAASTYRYDAAGNRLEGVGEHAREDARQAFAENELYRSGFSRSETRASQAGEGPARWAGNRVERIAGNRYRFDALGNLVERIGADGERLRLAYDGAQRLVHLTRDYADGTRLEARYRYDALSRRIAKVVLRDGVEQQVRFGWDGDRQCAEAFARELRTTVHEPGGFVPLLRLEQACEPDPPELLQLRQAFAAEGQPLPAQCVPALGEARIAFFHTDHLGTPLQLSDERGQLRWQGVPDDWRAVAPERQPGAQPIRFQGQYHDEESGLYYNRYRYYLPEAGRYASQDPLGLGGGPNPYAYALNAPTLAYDPTGLIIPLVVIGAFAARAAIGAALGAGIELGMQTGKQVLGQMKDNWDSDRDLTDIKWKCIDINWKHVGASAAIGTVAPGMLSTGKTVVQSAKAIRTLSGQAANTANRAAKLAARKAAHADTIKKAVATQAAWQTGKQIVKCPLKDEEEECPPQ.

The disordered stretch occupies residues 395 to 419 (GRETRRRRDGQGRMLEEESPGKARY). Residues 403–415 (DGQGRMLEEESPG) are compositionally biased toward basic and acidic residues.

Toxin secreted by the H1 type VI (H1-T6SS) secretion system that acts on bacterial target cells. The producing bacterium is protected by a cognate immunity protein. This chain is Toxin protein Tse5, found in Pseudomonas aeruginosa (strain ATCC 15692 / DSM 22644 / CIP 104116 / JCM 14847 / LMG 12228 / 1C / PRS 101 / PAO1).